A 117-amino-acid polypeptide reads, in one-letter code: Holo-[acyl-carrier-protein] synthase (117 aa).

The Mg(2+) site is built by D8 and E58.

Belongs to the P-Pant transferase superfamily. AcpS family. Mg(2+) serves as cofactor.

It is found in the cytoplasm. It catalyses the reaction apo-[ACP] + CoA = holo-[ACP] + adenosine 3',5'-bisphosphate + H(+). In terms of biological role, transfers the 4'-phosphopantetheine moiety from coenzyme A to a Ser of acyl-carrier-protein. This Latilactobacillus sakei subsp. sakei (strain 23K) (Lactobacillus sakei subsp. sakei) protein is Holo-[acyl-carrier-protein] synthase.